The primary structure comprises 1043 residues: Unconventional myosin-Ia (1043 aa).

The Myosin motor domain occupies 8–694 (VGVEDLILLE…TLFYLEEQRR (687 aa)). 101–108 (GESGAGKT) is a binding site for ATP. The tract at residues 571-593 (VAVLMKNLYSKNPNYIRCIKPND) is actin-binding. IQ domains follow at residues 697–719 (LQQL…HYQQ), 720–742 (MRKS…HYGK), and 743–772 (IRSS…SGAA). Residues 858–1042 (KASYPQSVPI…KGSNAMEVTV (185 aa)) form the TH1 domain.

The protein belongs to the TRAFAC class myosin-kinesin ATPase superfamily. Myosin family. In terms of processing, phosphorylated by ALPK1.

In terms of biological role, involved in directing the movement of organelles along actin filaments. This is Unconventional myosin-Ia (Myo1a) from Mus musculus (Mouse).